The sequence spans 594 residues: Zinc finger protein 467 (594 aa).

The interval 1 to 86 (MRETLEALNS…PQKAEPAGSV (86 aa)) is disordered. The segment at 1-183 (MRETLEALNS…TLRLHQRLHR (183 aa)) is interaction with STAT3. Over residues 31–47 (SNAQEKMSSRGESTLHS) the composition is skewed to polar residues. Positions 54 to 64 (PGQKEGIHTEQ) are enriched in basic and acidic residues. A Glycyl lysine isopeptide (Lys-Gly) (interchain with G-Cter in SUMO2) cross-link involves residue Lys97. 12 C2H2-type zinc fingers span residues 160–182 (YGCE…QRLH), 188–210 (CACP…QRSH), 216–238 (FPCS…LRTH), 244–266 (YPCA…QKTH), 272–294 (FPCT…QRIH), 300–322 (YQCT…QRVH), 355–377 (FACS…QSLH), 430–452 (FFCP…RRVH), 458–480 (FACA…SRAH), 486–508 (FACA…QAVH), 514–536 (HACA…QAIH), and 542–564 (FSCP…QRIH). The tract at residues 313 to 351 (QHLVRHQRVHDAASRTRSSPDIPVAPHSPTASLTPSPPG) is disordered. Residue Lys368 forms a Glycyl lysine isopeptide (Lys-Gly) (interchain with G-Cter in SUMO2) linkage.

This sequence belongs to the krueppel C2H2-type zinc-finger protein family. Interacts with STAT3. Enhances STAT3 activity by keeping it in the nucleus.

Its subcellular location is the nucleus. In terms of biological role, transcription factor that promotes adipocyte differentiation and suppresses osteoblast differentiation in the bone marrow. Enhances the osteoclast-supporting ability of stromal cells. Binds with STAT3 the consensus sequence 5'-CTTCTGGGAAGA-3' of the acute phase response element (APRE). Transactivates several promoters including FOS, OSM and PPARG. Recruits a histone deacetylase complex. This chain is Zinc finger protein 467 (Znf467), found in Mus musculus (Mouse).